We begin with the raw amino-acid sequence, 413 residues long: S-adenosylmethionine synthase (413 aa).

An ATP-binding site is contributed by H15. D17 contributes to the Mg(2+) binding site. Residue E43 participates in K(+) binding. Residues E56 and Q100 each contribute to the L-methionine site. Positions 100 to 110 are flexible loop; it reads QSPDISQGVNE. Residues 171-173, 248-249, D257, 263-264, A280, and K284 each bind ATP; these read DGK, KF, and RK. D257 contacts L-methionine. An L-methionine-binding site is contributed by K288.

The protein belongs to the AdoMet synthase family. In terms of assembly, homotetramer; dimer of dimers. Mg(2+) serves as cofactor. It depends on K(+) as a cofactor.

Its subcellular location is the cytoplasm. It carries out the reaction L-methionine + ATP + H2O = S-adenosyl-L-methionine + phosphate + diphosphate. It participates in amino-acid biosynthesis; S-adenosyl-L-methionine biosynthesis; S-adenosyl-L-methionine from L-methionine: step 1/1. Functionally, catalyzes the formation of S-adenosylmethionine (AdoMet) from methionine and ATP. The overall synthetic reaction is composed of two sequential steps, AdoMet formation and the subsequent tripolyphosphate hydrolysis which occurs prior to release of AdoMet from the enzyme. The sequence is that of S-adenosylmethionine synthase from Prochlorococcus marinus subsp. pastoris (strain CCMP1986 / NIES-2087 / MED4).